The primary structure comprises 810 residues: Venom phosphodiesterase 2 (810 aa).

The first 23 residues, 1 to 23 (MIQQKVLFISLVAVTLGLGLGLG), serve as a signal peptide directing secretion. One can recognise an SMB domain in the interval 33–77 (QSWSCSKLRCGEKRIANVLCSCSDDCLEKKDCCTDYKSICKGETS). Intrachain disulfides connect Cys-37–Cys-42, Cys-37–Cys-54, Cys-42–Cys-72, Cys-52–Cys-54, Cys-52–Cys-65, Cys-58–Cys-64, Cys-65–Cys-72, Cys-83–Cys-129, and Cys-91–Cys-303. Asp-106 and Thr-144 together coordinate a divalent metal cation. Thr-144 functions as the AMP-threonine intermediate in the catalytic mechanism. Asn-175, Asn-218, and Asn-229 each carry an N-linked (GlcNAc...) asparagine glycan. Lys-230 serves as a coordination point for AMP. A divalent metal cation contacts are provided by Asp-264, His-268, Asp-311, and His-312. His-268 contacts AMP. Intrachain disulfides connect Cys-319-Cys-416, Cys-367-Cys-752, Cys-500-Cys-558, Cys-513-Cys-613, Cys-515-Cys-598, and Cys-721-Cys-731. An N-linked (GlcNAc...) asparagine glycan is attached at Asn-364. His-421 contacts a divalent metal cation. Asn-471, Asn-553, Asn-633, and Asn-704 each carry an N-linked (GlcNAc...) asparagine glycan.

The protein belongs to the nucleotide pyrophosphatase/phosphodiesterase family. Monomer cleaved in two subunits; disulfide-linked. Is synthesized as a single-chain protein and is subsequently cleaved to form a two-subunit protein held together with disulfide bonds. The cofactor is a divalent metal cation. Expressed by venom gland.

The protein localises to the secreted. It carries out the reaction ADP + H2O = AMP + phosphate + H(+). Its function is as follows. Hydrolyzes ADP with high activity. Shows weak or no activity on 5'-AMP, 5'-GMP, 3'-AMP, ATP, cAMP, and cGMP. Is devoid of monophosphatase and proteinase activities. Dose-dependently inhibits platelet aggregation induced by ADP (IC(50)=0.99 uM) and collagen (IC(50)=1.4 uM). In Crotalus adamanteus (Eastern diamondback rattlesnake), this protein is Venom phosphodiesterase 2.